The primary structure comprises 288 residues: Probable endonuclease 4 (288 aa).

Residues H75, H115, E153, D187, H190, H224, D237, H239, and E269 each coordinate Zn(2+).

This sequence belongs to the AP endonuclease 2 family. Zn(2+) is required as a cofactor.

It carries out the reaction Endonucleolytic cleavage to 5'-phosphooligonucleotide end-products.. Functionally, endonuclease IV plays a role in DNA repair. It cleaves phosphodiester bonds at apurinic or apyrimidinic (AP) sites, generating a 3'-hydroxyl group and a 5'-terminal sugar phosphate. The protein is Probable endonuclease 4 of Chlamydia trachomatis serovar L2 (strain ATCC VR-902B / DSM 19102 / 434/Bu).